A 282-amino-acid chain; its full sequence is Pantothenate synthetase (282 aa).

30–37 (MGFLHDGH) contributes to the ATP binding site. His37 acts as the Proton donor in catalysis. Gln60 serves as a coordination point for (R)-pantoate. Gln60 provides a ligand contact to beta-alanine. 146–149 (GQKD) contacts ATP. Gln152 contributes to the (R)-pantoate binding site. ATP-binding positions include Ile175 and 183-186 (KSSR).

The protein belongs to the pantothenate synthetase family. As to quaternary structure, homodimer.

It is found in the cytoplasm. The catalysed reaction is (R)-pantoate + beta-alanine + ATP = (R)-pantothenate + AMP + diphosphate + H(+). The protein operates within cofactor biosynthesis; (R)-pantothenate biosynthesis; (R)-pantothenate from (R)-pantoate and beta-alanine: step 1/1. Its function is as follows. Catalyzes the condensation of pantoate with beta-alanine in an ATP-dependent reaction via a pantoyl-adenylate intermediate. This chain is Pantothenate synthetase, found in Campylobacter jejuni subsp. jejuni serotype O:6 (strain 81116 / NCTC 11828).